The chain runs to 382 residues: 6-hydroxynicotinate 3-monooxygenase (382 aa).

The signal sequence occupies residues 1 to 25 (MRGRQKIAIVGAGLGGAAAATLLQQ). Residues glycine 15, 34 to 35 (EQ), histidine 47, arginine 108, and leucine 130 each bind FAD. Histidine 47 serves as the catalytic Proton acceptor. Residue tyrosine 215 is the Proton acceptor of the active site. FAD contacts are provided by residues aspartate 294 and 307-308 (AC).

Belongs to the 6-hydroxynicotinate 3-monooxygenase family. As to quaternary structure, monomer. Requires FAD as cofactor.

The catalysed reaction is 6-hydroxynicotinate + NADH + O2 + 2 H(+) = 2,5-dihydroxypyridine + CO2 + NAD(+) + H2O. It functions in the pathway cofactor degradation; nicotinate degradation. Flavin-dependent monooxygenase (FMO) that catalyzes the decarboxylative hydroxylation of 6-hydroxynicotinic acid (6-HNA) to 2,5-dihydroxypyridine (2,5-DHP) with concomitant oxidation of NADH, a step in the aerobic nicotinate degradation pathway. The polypeptide is 6-hydroxynicotinate 3-monooxygenase (Pseudomonas putida (strain ATCC 47054 / DSM 6125 / CFBP 8728 / NCIMB 11950 / KT2440)).